Here is an 88-residue protein sequence, read N- to C-terminus: UPF0297 protein STER_1937 (88 aa).

Belongs to the UPF0297 family.

In Streptococcus thermophilus (strain ATCC BAA-491 / LMD-9), this protein is UPF0297 protein STER_1937.